The chain runs to 195 residues: Flavin-dependent monooxygenase, reductase subunit HsaB (195 aa).

Residues 42 to 46 (PVGFA), 48 to 49 (QS), 63 to 65 (CPT), 69 to 70 (RS), and 95 to 96 (RF) contribute to the FAD site. An NAD(+)-binding site is contributed by 160–163 (FYRG).

Belongs to the non-flavoprotein flavin reductase family. As to quaternary structure, hsaAB monooxygenase consists of an oxygenase component HsaA and a reductase component HsaB.

The catalysed reaction is a reduced flavin + NAD(+) = an oxidized flavin + NADH + 2 H(+). The protein operates within lipid metabolism; steroid biosynthesis. Functionally, catalyzes the reduction of free flavins (FMN or FAD) by NADH. Subsequently, the reduced flavins diffuse to the HsaA oxygenase subunit. This is Flavin-dependent monooxygenase, reductase subunit HsaB (hsaB) from Rhodococcus jostii (strain RHA1).